We begin with the raw amino-acid sequence, 315 residues long: Methionyl-tRNA formyltransferase (315 aa).

The N-terminal domain stretch occupies residues 2–189 (SESLRIIFAG…LITTLKQLAD (188 aa)). 113 to 116 (SLLP) contributes to the (6S)-5,6,7,8-tetrahydrofolate binding site. Residues 210–315 (KEEARIDWSL…EWFVPGNRLV (106 aa)) are C-terminal domain.

It belongs to the Fmt family. Monomer.

The enzyme catalyses L-methionyl-tRNA(fMet) + (6R)-10-formyltetrahydrofolate = N-formyl-L-methionyl-tRNA(fMet) + (6S)-5,6,7,8-tetrahydrofolate + H(+). Its activity is regulated as follows. Activity is optimum in the presence of Mg(2+) and K(+). Its function is as follows. Attaches a formyl group to the free amino group of methionyl-tRNA(fMet). The formyl group appears to play a dual role in the initiator identity of N-formylmethionyl-tRNA by promoting its recognition by IF2 and preventing the misappropriation of this tRNA by the elongation apparatus. This chain is Methionyl-tRNA formyltransferase, found in Escherichia coli (strain K12).